Here is a 99-residue protein sequence, read N- to C-terminus: Virion membrane protein OPG135 (99 aa).

The first 22 residues, 1-22 (MSCYTAILKSVGGLALFQVANG), serve as a signal peptide directing secretion. Topologically, residues 23 to 45 (AIDLCRHFFMYFCEQKLRPNSFW) are intravirion. The helical transmembrane segment at 46 to 66 (FVVVRAIASMIMYLVLGIALL) threads the bilayer. Residues 67–83 (YISEQDDKKNTNNDGSN) are Virion surface-facing. Residues 73–89 (DKKNTNNDGSNNDKRNE) show a composition bias toward basic and acidic residues. Residues 73–99 (DKKNTNNDGSNNDKRNESSINSNSSPK) form a disordered region. Asn-88 is a glycosylation site (N-linked (GlcNAc...) asparagine; by host). Over residues 90–99 (SSINSNSSPK) the composition is skewed to polar residues.

It belongs to the oerthopoxvirus OPG135 family.

The protein localises to the virion membrane. The protein resides in the host cytoplasm. Functionally, envelope protein. Required for an early step in virion morphogenesis. The sequence is that of Virion membrane protein OPG135 (OPG135) from Homo sapiens (Human).